Here is a 374-residue protein sequence, read N- to C-terminus: Succinyl-diaminopimelate desuccinylase (374 aa).

H66 is a binding site for Zn(2+). Residue D68 is part of the active site. D99 lines the Zn(2+) pocket. E133 (proton acceptor) is an active-site residue. Residues E134, E162, and H348 each contribute to the Zn(2+) site.

This sequence belongs to the peptidase M20A family. DapE subfamily. As to quaternary structure, homodimer. Zn(2+) serves as cofactor. The cofactor is Co(2+).

The catalysed reaction is N-succinyl-(2S,6S)-2,6-diaminopimelate + H2O = (2S,6S)-2,6-diaminopimelate + succinate. The protein operates within amino-acid biosynthesis; L-lysine biosynthesis via DAP pathway; LL-2,6-diaminopimelate from (S)-tetrahydrodipicolinate (succinylase route): step 3/3. In terms of biological role, catalyzes the hydrolysis of N-succinyl-L,L-diaminopimelic acid (SDAP), forming succinate and LL-2,6-diaminopimelate (DAP), an intermediate involved in the bacterial biosynthesis of lysine and meso-diaminopimelic acid, an essential component of bacterial cell walls. The sequence is that of Succinyl-diaminopimelate desuccinylase from Coxiella burnetii (strain RSA 331 / Henzerling II).